A 153-amino-acid chain; its full sequence is UPF0158 protein PA5073 (153 aa).

The protein belongs to the UPF0158 family.

This chain is UPF0158 protein PA5073, found in Pseudomonas aeruginosa (strain ATCC 15692 / DSM 22644 / CIP 104116 / JCM 14847 / LMG 12228 / 1C / PRS 101 / PAO1).